Reading from the N-terminus, the 231-residue chain is Ribosomal RNA small subunit methyltransferase nep-1 (231 aa).

S-adenosyl-L-methionine contacts are provided by residues Met-161, Gly-188, Gly-193, and 206–211 (ISNYPL).

It belongs to the class IV-like SAM-binding methyltransferase superfamily. RNA methyltransferase NEP1 family. Homodimer.

It is found in the nucleus. It localises to the nucleolus. It catalyses the reaction a pseudouridine in rRNA + S-adenosyl-L-methionine = an N(1)-methylpseudouridine in rRNA + S-adenosyl-L-homocysteine + H(+). Functionally, S-adenosyl-L-methionine-dependent pseudouridine N(1)-methyltransferase that methylates a pseudouridine in 18S rRNA. Involved the biosynthesis of the hypermodified N1-methyl-N3-(3-amino-3-carboxypropyl) pseudouridine (m1acp3-Psi) conserved in eukaryotic 18S rRNA. Also has an essential role in 40S ribosomal subunit biogenesis independent on its methyltransferase activity, facilitating the incorporation of ribosomal protein S19 during the formation of pre-ribosomes. The polypeptide is Ribosomal RNA small subunit methyltransferase nep-1 (Caenorhabditis elegans).